We begin with the raw amino-acid sequence, 308 residues long: 4-hydroxy-3-methylbut-2-enyl diphosphate reductase (308 aa).

Cys-13 contacts [4Fe-4S] cluster. The (2E)-4-hydroxy-3-methylbut-2-enyl diphosphate site is built by His-42 and His-75. The dimethylallyl diphosphate site is built by His-42 and His-75. Positions 42 and 75 each coordinate isopentenyl diphosphate. Position 97 (Cys-97) interacts with [4Fe-4S] cluster. Residue His-125 participates in (2E)-4-hydroxy-3-methylbut-2-enyl diphosphate binding. Dimethylallyl diphosphate is bound at residue His-125. Residue His-125 coordinates isopentenyl diphosphate. Glu-127 serves as the catalytic Proton donor. A (2E)-4-hydroxy-3-methylbut-2-enyl diphosphate-binding site is contributed by Thr-165. Residue Cys-195 coordinates [4Fe-4S] cluster. (2E)-4-hydroxy-3-methylbut-2-enyl diphosphate contacts are provided by Ser-223, Ser-224, Asn-225, and Ser-267. Residues Ser-223, Ser-224, Asn-225, and Ser-267 each coordinate dimethylallyl diphosphate. The isopentenyl diphosphate site is built by Ser-223, Ser-224, Asn-225, and Ser-267.

The protein belongs to the IspH family. The cofactor is [4Fe-4S] cluster.

The catalysed reaction is isopentenyl diphosphate + 2 oxidized [2Fe-2S]-[ferredoxin] + H2O = (2E)-4-hydroxy-3-methylbut-2-enyl diphosphate + 2 reduced [2Fe-2S]-[ferredoxin] + 2 H(+). It catalyses the reaction dimethylallyl diphosphate + 2 oxidized [2Fe-2S]-[ferredoxin] + H2O = (2E)-4-hydroxy-3-methylbut-2-enyl diphosphate + 2 reduced [2Fe-2S]-[ferredoxin] + 2 H(+). The protein operates within isoprenoid biosynthesis; dimethylallyl diphosphate biosynthesis; dimethylallyl diphosphate from (2E)-4-hydroxy-3-methylbutenyl diphosphate: step 1/1. Its pathway is isoprenoid biosynthesis; isopentenyl diphosphate biosynthesis via DXP pathway; isopentenyl diphosphate from 1-deoxy-D-xylulose 5-phosphate: step 6/6. Catalyzes the conversion of 1-hydroxy-2-methyl-2-(E)-butenyl 4-diphosphate (HMBPP) into a mixture of isopentenyl diphosphate (IPP) and dimethylallyl diphosphate (DMAPP). Acts in the terminal step of the DOXP/MEP pathway for isoprenoid precursor biosynthesis. The chain is 4-hydroxy-3-methylbut-2-enyl diphosphate reductase from Chlamydia muridarum (strain MoPn / Nigg).